Here is a 362-residue protein sequence, read N- to C-terminus: Protein RecA (362 aa).

Residue 77–84 (GPESSGKT) participates in ATP binding.

This sequence belongs to the RecA family.

Its subcellular location is the cytoplasm. Its function is as follows. Can catalyze the hydrolysis of ATP in the presence of single-stranded DNA, the ATP-dependent uptake of single-stranded DNA by duplex DNA, and the ATP-dependent hybridization of homologous single-stranded DNAs. It interacts with LexA causing its activation and leading to its autocatalytic cleavage. The sequence is that of Protein RecA from Allorhizobium ampelinum (strain ATCC BAA-846 / DSM 112012 / S4) (Agrobacterium vitis (strain S4)).